Reading from the N-terminus, the 388-residue chain is MVSPRGVCFLLFLLLGSVFGSVFMLGPLLPLMLLSPSRYRWITDRIVATWLTLPVALLELVLGVKVVVTGDGFIPGERSVIIMNHRTRLDWMFLWCCLLRYSYLRQEKICLKAALKSVPGFGWAMQVASFIFIQRRWEDDRTHMSNMLQYFCRIREPVQLLLFPEGTDLTENTRARSDEFAEKNGLQKYEYVLHPRTTGFTFIVDTLRGGDNLDAVHDITVAYPQNIPQTERHLLAGVFPREIHFHVQRFTVASVPAGAAGLQAWCQERWREKERRLQRFYETVPRRFDAPAVGVCVREPCCQSGQCVCVPRCKSEGRVRIILVASLLYWSVFITAACASLCLCPPAQFYFLFMVVFFLCQQRFTGGLELMELACHRYWSRRSADKQE.

2 helical membrane passes run 9 to 29 (FLLF…GPLL) and 46 to 66 (IVAT…GVKV). The HXXXXD motif signature appears at 85–90 (HRTRLD). 2 helical membrane passes run 321 to 341 (IILV…CASL) and 342 to 362 (CLCP…LCQQ).

The protein belongs to the 1-acyl-sn-glycerol-3-phosphate acyltransferase family.

Its subcellular location is the endoplasmic reticulum membrane. It carries out the reaction a 1-acyl-sn-glycero-3-phosphate + an acyl-CoA = a 1,2-diacyl-sn-glycero-3-phosphate + CoA. It catalyses the reaction a 1-acyl-sn-glycero-3-phospho-(1D-myo-inositol) + an acyl-CoA = a 1,2-diacyl-sn-glycero-3-phospho-(1D-myo-inositol) + CoA. The catalysed reaction is 1-acyl-sn-glycero-3-phospho-(1'-sn-glycerol) + an acyl-CoA = a 1,2-diacyl-sn-glycero-3-phospho-(1'-sn-glycerol) + CoA. The enzyme catalyses 1-hexadecanoyl-sn-glycero-3-phosphate + (9Z)-octadecenoyl-CoA = 1-hexadecanoyl-2-(9Z-octadecenoyl)-sn-glycero-3-phosphate + CoA. It carries out the reaction 1-(9Z-octadecenoyl)-sn-glycero-3-phosphate + (9Z)-octadecenoyl-CoA = 1,2-di-(9Z-octadecenoyl)-sn-glycero-3-phosphate + CoA. It catalyses the reaction 1-(9Z,12Z)-octadecadienoyl-sn-glycero-3-phosphate + (9Z)-octadecenoyl-CoA = 1-(9Z,12Z)-octadecadienoyl-2-(9Z)-octadecenoyl-sn-glycero-3-phosphate + CoA. The catalysed reaction is 1-(9Z,12Z,15Z)-octadecatrienoyl-sn-glycero-3-phosphate + (9Z)-octadecenoyl-CoA = 1-(9Z,12Z,15Z)-octadecatrienoyl-2-(9Z)-octadecenoyl-sn-glycero-3-phosphate + CoA. The enzyme catalyses 1-(9Z-octadecenoyl)-sn-glycero-3-phosphate + hexadecanoyl-CoA = 1-(9Z)-octadecenoyl-2-hexadecanoyl-sn-glycero-3-phosphate + CoA. It carries out the reaction 1-(9Z-octadecenoyl)-sn-glycero-3-phosphate + octadecanoyl-CoA = 1-(9Z-octadecenoyl)-2-octadecanoyl-sn-glycero-3-phosphate + CoA. It catalyses the reaction 1-acyl-sn-glycero-3-phospho-(1'-sn-glycerol) + (9Z)-octadecenoyl-CoA = 1-acyl-2-(9Z-octadecenoyl)-sn-glycero-3-phospho-(1'-sn-glycerol) + CoA. The catalysed reaction is a 1-acyl-sn-glycero-3-phospho-(1D-myo-inositol) + (9Z)-octadecenoyl-CoA = a 1-acyl-2-(9Z-octadecenoyl)-sn-glycero-3-phospho-(1D-myo-inositol) + CoA. The enzyme catalyses 1-hexadecanoyl-sn-glycero-3-phospho-(1D-myo-inositol) + hexadecanoyl-CoA = 1,2-dihexadecanoyl-sn-glycero-3-phospho-(1D-myo-inositol) + CoA. It carries out the reaction 1-hexadecanoyl-sn-glycero-3-phospho-(1D-myo-inositol) + octadecanoyl-CoA = 1-hexadecanoyl-2-octadecanoyl-sn-glycero-3-phospho-(1D-myo-inositol) + CoA. It catalyses the reaction 1-hexadecanoyl-sn-glycero-3-phospho-(1D-myo-inositol) + (9Z)-octadecenoyl-CoA = 1-hexadecanoyl-2-(9Z-octadecenoyl)-sn-glycero-3-phospho-(1D-myo-inositol) + CoA. The catalysed reaction is 1-hexadecanoyl-sn-glycero-3-phospho-(1D-myo-inositol) + (9Z,12Z)-octadecadienoyl-CoA = 1-hexadecanoyl-2-(9Z,12Z-octadecadienoyl)-sn-glycero-3-phospho-(1D-myo-inositol) + CoA. The enzyme catalyses 1-hexadecanoyl-sn-glycero-3-phospho-(1D-myo-inositol) + (5Z,8Z,11Z,14Z)-eicosatetraenoyl-CoA = 1-hexadecanoyl-2-(5Z,8Z,11Z,14Z-eicosatetraenoyl)-sn-glycero-3-phospho-D-myo-inositol + CoA. It carries out the reaction 1-hexadecanoyl-sn-glycero-3-phospho-(1'-sn-glycerol) + hexadecanoyl-CoA = 1,2-dihexadecanoyl-sn-glycero-3-phospho-(1'-sn-glycerol) + CoA. It catalyses the reaction 1-hexadecanoyl-sn-glycero-3-phospho-(1'-sn-glycerol) + octadecanoyl-CoA = 1-hexadecanoyl-2-octadecanoyl-sn-glycero-3-phospho-(1'-sn-glycerol) + CoA. The catalysed reaction is 1-hexadecanoyl-sn-glycero-3-phospho-(1'-sn-glycerol) + (9Z)-octadecenoyl-CoA = 1-hexadecanoyl-2-(9Z-octadecenoyl)-sn-glycero-3-phospho-(1'-sn-glycerol) + CoA. The enzyme catalyses 1-hexadecanoyl-sn-glycero-3-phospho-(1'-sn-glycerol) + (9Z,12Z)-octadecadienoyl-CoA = 1-hexadecanoyl-2-(9Z,12Z-octadecadienoyl)-sn-glycero-3-phospho-(1'-sn-glycerol) + CoA. It carries out the reaction 1-tetradecanoyl-sn-glycero-3-phospho-(1'-sn-glycerol) + (9Z)-octadecenoyl-CoA = 1-tetradecanoyl-2-(9Z-octadecenoyl)-sn-glycero-3-phospho-(1'-sn-glycerol) + CoA. It catalyses the reaction 1-octadecanoyl-sn-glycero-3-phospho-(1'-sn-glycerol) + (9Z)-octadecenoyl-CoA = 1-octadecanoyl-2-(9Z-octadecenoyl)-sn-glycero-3-phospho-(1'-sn-glycerol) + CoA. The catalysed reaction is 1-(9Z-octadecenoyl)-sn-glycero-3-phospho-(1'-sn-glycerol) + (9Z)-octadecenoyl-CoA = 1,2-di-(9Z-octadecenoyl)-sn-glycero-3-phospho-(1'-sn-glycerol) + CoA. The enzyme catalyses 1-hexadecanoyl-sn-glycero-3-phospho-(1D-myo-inositol) + dodecanoyl-CoA = 1-hexadecanoyl-2-dodecanoyl-sn-glycero-3-phospho-(1D-myo-inositol) + CoA. It carries out the reaction 1',3'-bis-[1-acyl-sn-glycero-3-phospho]-glycerol + (9Z)-octadecenoyl-CoA = 1'-[1-acyl-2-(9Z)-octadecenoyl-sn-glycero-3-phospho],3'-[1-acyl,2-hydroxy-sn-glycero-3-phospho]-glycerol + CoA. It catalyses the reaction 1'-[1,2-diacyl-sn-glycero-3-phospho],3'-[1-acyl-sn-glycero-3-phospho]-glycerol + (9Z)-octadecenoyl-CoA = 1'-[1,2-diacyl-sn-glycero-3-phospho],3'-[1-acyl,2-(9Z)-octadecenoyl-sn-glycero-3-phospho]-glycerol + CoA. The catalysed reaction is 1'-[1,2-diacyl-sn-glycero-3-phospho],3'-[1-acyl-sn-glycero-3-phospho]-glycerol + (9Z,12Z)-octadecadienoyl-CoA = 1'-[1,2-diacyl-sn-glycero-3-phospho],3'-[1-acyl,2-(9Z,12Z)-octadecadienoyl-sn-glycero-3-phospho]-glycerol + CoA. The enzyme catalyses 1'-[1,2-diacyl-sn-glycero-3-phospho],3'-[1-acyl-sn-glycero-3-phospho]-glycerol + dodecanoyl-CoA = 1'-[1,2-diacyl-sn-glycero-3-phospho],3'-[1-acyl,2-dodecanoyl-sn-glycero-3-phospho]-glycerol + CoA. It carries out the reaction 1',3'-bis-[1-acyl-sn-glycero-3-phospho]-glycerol + dodecanoyl-CoA = 1'-[1-acyl-2-dodecanoyl-sn-glycero-3-phospho],3'-[1-acyl,2-hydroxy-sn-glycero-3-phospho]-glycerol + CoA. It catalyses the reaction a 1-acyl-sn-glycero-3-phosphate + (9Z)-octadecenoyl-CoA = a 1-acyl-2-(9Z-octadecenoyl)-sn-glycero-3-phosphate + CoA. The catalysed reaction is 1',3'-bis-[1-acyl-sn-glycero-3-phospho]-glycerol + (9Z,12Z)-octadecadienoyl-CoA = 1'-[1-acyl-2-(9Z,12Z)-octadecadienoyl-sn-glycero-3-phospho],3'-[1-acyl,2-hydroxy-sn-glycero-3-phospho]-glycerol + CoA. The enzyme catalyses 1',3'-bis-[1-acyl-sn-glycero-3-phospho]-glycerol + hexadecanoyl-CoA = 1'-[1-acyl-2-hexadecanoyl-sn-glycero-3-phospho],3'-[1-acyl,2-hydroxy-sn-glycero-3-phospho]-glycerol + CoA. It carries out the reaction 1',3'-bis-[1-acyl-sn-glycero-3-phospho]-glycerol + octadecanoyl-CoA = 1'-[1-acyl-2-octadecanoyl-sn-glycero-3-phospho],3'-[1-acyl,2-hydroxy-sn-glycero-3-phospho]-glycerol + CoA. It catalyses the reaction 1'-[1,2-diacyl-sn-glycero-3-phospho],3'-[1-acyl-sn-glycero-3-phospho]-glycerol + octanoyl-CoA = 1'-[1,2-diacyl-sn-glycero-3-phospho],3'-[1-acyl,2-octanoyl-sn-glycero-3-phospho]-glycerol + CoA. The catalysed reaction is 1',3'-bis-[1-acyl-sn-glycero-3-phospho]-glycerol + octanoyl-CoA = 1'-[1-acyl-2-octanoyl-sn-glycero-3-phospho],3'-[1-acyl,2-hydroxy-sn-glycero-3-phospho]-glycerol + CoA. The enzyme catalyses 1'-[1,2-diacyl-sn-glycero-3-phospho],3'-[1-acyl-sn-glycero-3-phospho]-glycerol + hexadecanoyl-CoA = 1'-[1,2-diacyl-sn-glycero-3-phospho],3'-[1-acyl,2-hexadecanoyl-sn-glycero-3-phospho]-glycerol + CoA. It carries out the reaction 1'-[1,2-diacyl-sn-glycero-3-phospho],3'-[1-acyl-sn-glycero-3-phospho]-glycerol + (5Z,8Z,11Z,14Z)-eicosatetraenoyl-CoA = 1'-[1,2-diacyl-sn-glycero-3-phospho],3'-[1-acyl,2-(5Z,8Z,11Z,14Z)-eicosatetraenoyl-sn-glycero-3-phospho]-glycerol + CoA. It catalyses the reaction 1',3'-bis-[1-acyl-sn-glycero-3-phospho]-glycerol + (5Z,8Z,11Z,14Z)-eicosatetraenoyl-CoA = 1'-[1-acyl-2-(5Z,8Z,11Z,14Z)-eicosatetraenoyl-sn-glycero-3-phospho],3'-[1-acyl,2-hydroxy-sn-glycero-3-phospho]-glycerol + CoA. The catalysed reaction is a 1-acyl-sn-glycero-3-phospho-(1D-myo-inositol) + octadecanoyl-CoA = a 1-acyl-2-octadecanoyl-sn-glycero-3-phospho-(1D-myo-inositol) + CoA. The enzyme catalyses a 2-acyl-sn-glycero-3-phospho-D-myo-inositol + octadecanoyl-CoA = 1-octadecanoyl-2-acyl-sn-glycero-3-phospho-1D-myo-inositol + CoA. It participates in phospholipid metabolism; CDP-diacylglycerol biosynthesis; CDP-diacylglycerol from sn-glycerol 3-phosphate: step 2/3. In terms of biological role, exhibits acyl-CoA:lysocardiolipin acyltransferase (ALCAT) activity; catalyzes the reacylation of lyso-cardiolipin to cardiolipin (CL), a key step in CL remodeling. Recognizes both monolysocardiolipin and dilysocardiolipin as substrates with a preference for linoleoyl-CoA and oleoyl-CoA as acyl donors. Also exhibits 1-acyl-sn-glycerol-3-phosphate acyltransferase activity (AGPAT) activity; converts 1-acyl-sn-glycerol-3- phosphate (lysophosphatidic acid or LPA) into 1,2-diacyl-sn-glycerol-3- phosphate (phosphatidic acid or PA) by incorporating an acyl moiety at the sn-2 position of the glycerol backbone. Possesses both lysophosphatidylinositol acyltransferase (LPIAT) and lysophosphatidylglycerol acyltransferase (LPGAT) activities. Required for establishment of the hematopoietic and endothelial lineages. The protein is Lysocardiolipin acyltransferase 1 (lclat1) of Danio rerio (Zebrafish).